We begin with the raw amino-acid sequence, 133 residues long: ATP synthase epsilon chain (133 aa).

Belongs to the ATPase epsilon chain family. In terms of assembly, F-type ATPases have 2 components, CF(1) - the catalytic core - and CF(0) - the membrane proton channel. CF(1) has five subunits: alpha(3), beta(3), gamma(1), delta(1), epsilon(1). CF(0) has three main subunits: a, b and c.

The protein localises to the cell membrane. In terms of biological role, produces ATP from ADP in the presence of a proton gradient across the membrane. This is ATP synthase epsilon chain from Halalkalibacterium halodurans (strain ATCC BAA-125 / DSM 18197 / FERM 7344 / JCM 9153 / C-125) (Bacillus halodurans).